Here is a 793-residue protein sequence, read N- to C-terminus: E3 UFM1-protein ligase 1 (793 aa).

A2 is modified (N-acetylalanine). The tract at residues A2–P200 is mediates interaction with DDRGK1. Residues A2–F212 are required for E3 UFM1-protein ligase activity. The tract at residues D121–S250 is involved in CDK5RAP3-binding. The interval P200–D400 is mediates interaction with TRIP4. The interval V410–D473 is disordered. R433 is modified (omega-N-methylarginine). A phosphoserine mark is found at S458 and S462. The segment at I490 to L683 is mediates interaction with CDK5RAP3. Position 535 is a phosphothreonine (T535). The disordered stretch occupies residues N742 to K769. Phosphoserine is present on residues S752 and S753. Basic and acidic residues predominate over residues K758–K769.

The protein belongs to the UFL1 family. Catalytic component of the UFM1 ribosome E3 ligase (UREL) complex, composed of UFL1, DDRGK1 and CDK5RAP3. Interacts with E2-like enzyme UFC1. Interacts with RELA. Interacts with NBN; promoting recruitment to double-strand breaks following DNA damage. Interacts (when phosphorylated) with YWHAG/14-3-3-gamma; sequestering UFL1 and preventing its association with PDCD1/PD-1 substrate. In terms of processing, ubiquitinated, leading to its degradation by the proteasome. Interaction with CDK5RAP3 protects both proteins against ubiquitination and degradation via the proteasome. Post-translationally, phosphorylated at Ser-462 by ATM, enhancing protein ligase activity and promoting ATM activation in a positive feedback loop. Phosphorylation at Thr-535 by AMPK promotes its interaction with YWHAG/14-3-3-gamma, thereby preventing UFL1 association with PDCD1/PD-1 substrate. As to expression, ubiquitously expressed with expression detected in brain, skeletal muscle, lung, heart, gall bladder, liver, small intestine, pancreas, spleen and kidney (at protein level). At 8 weeks after birth, high expression in the Purkinje cell layer of the cerebellum.

Its subcellular location is the endoplasmic reticulum membrane. The protein resides in the cytoplasm. The protein localises to the cytosol. It localises to the nucleus. It is found in the chromosome. In terms of biological role, E3 protein ligase that mediates ufmylation, the covalent attachment of the ubiquitin-like modifier UFM1 to lysine residues on target proteins, and which plays a key role in various processes, such as ribosome recycling, response to DNA damage, interferon response or reticulophagy (also called ER-phagy). Catalyzes ufmylation of many protein, such as CD274/PD-L1, CDK5RAP3, CYB5R3, DDRGK1, EIF6, histone H4, MRE11, P4HB, PDCD1/PD-1, TRIP4, RPN1, RPS20/uS10, RPL10/uL16, RPL26/uL24, SYVN1/HRD1 and TP53/p53. As part of the UREL complex, plays a key role in ribosome recycling by catalyzing mono-ufmylation of RPL26/uL24 subunit of the 60S ribosome. Ufmylation of RPL26/uL24 occurs on free 60S ribosomes following ribosome dissociation: it weakens the junction between post-termination 60S subunits and SEC61 translocons, promoting release and recycling of the large ribosomal subunit from the endoplasmic reticulum membrane. Ufmylation of RPL26/uL24 and subsequent 60S ribosome recycling either take place after normal termination of translation or after ribosome stalling during cotranslational translocation at the endoplasmic reticulum. Involved in reticulophagy in response to endoplasmic reticulum stress by mediating ufmylation of proteins such as CYB5R3 and RPN1, thereby promoting lysosomal degradation of ufmylated proteins. Ufmylation in response to endoplasmic reticulum stress is essential for processes such as hematopoiesis, blood vessel morphogenesis or inflammatory response. Mediates ufmylation of DDRGK1 and CDK5RAP3; the role of these modifications is however unclear: as both DDRGK1 and CDK5RAP3 act as substrate adapters for ufmylation, it is uncertain whether ufmylation of these proteins is, a collateral effect or is required for ufmylation. Acts as a negative regulator of T-cell activation by mediating ufmylation and stabilization of PDCD1/PD-1. Also involved in the response to DNA damage: recruited to double-strand break sites following DNA damage and mediates monoufmylation of histone H4 and ufmylation of MRE11. Mediates ufmylation of TP53/p53, promoting its stability. Catalyzes ufmylation of TRIP4, thereby playing a role in nuclear receptor-mediated transcription. Required for hematopoietic stem cell function and hematopoiesis. This chain is E3 UFM1-protein ligase 1, found in Rattus norvegicus (Rat).